A 42-amino-acid chain; its full sequence is Cytochrome b559 subunit beta (42 aa).

The chain crosses the membrane as a helical span at residues 17 to 33 (WLTIHALAVPTVFFLGA). His21 contributes to the heme binding site.

It belongs to the PsbE/PsbF family. In terms of assembly, heterodimer of an alpha subunit and a beta subunit. PSII is composed of 1 copy each of membrane proteins PsbA, PsbB, PsbC, PsbD, PsbE, PsbF, PsbH, PsbI, PsbJ, PsbK, PsbL, PsbM, PsbT, PsbX, PsbY, PsbZ, Psb30/Ycf12, at least 3 peripheral proteins of the oxygen-evolving complex and a large number of cofactors. It forms dimeric complexes. Heme b serves as cofactor.

It is found in the plastid. The protein resides in the chloroplast thylakoid membrane. In terms of biological role, this b-type cytochrome is tightly associated with the reaction center of photosystem II (PSII). PSII is a light-driven water:plastoquinone oxidoreductase that uses light energy to abstract electrons from H(2)O, generating O(2) and a proton gradient subsequently used for ATP formation. It consists of a core antenna complex that captures photons, and an electron transfer chain that converts photonic excitation into a charge separation. This Emiliania huxleyi (Coccolithophore) protein is Cytochrome b559 subunit beta.